The following is a 140-amino-acid chain: 3-hydroxyacyl-[acyl-carrier-protein] dehydratase FabZ (140 aa).

The active site involves histidine 47.

Belongs to the thioester dehydratase family. FabZ subfamily.

Its subcellular location is the cytoplasm. The enzyme catalyses a (3R)-hydroxyacyl-[ACP] = a (2E)-enoyl-[ACP] + H2O. In terms of biological role, involved in unsaturated fatty acids biosynthesis. Catalyzes the dehydration of short chain beta-hydroxyacyl-ACPs and long chain saturated and unsaturated beta-hydroxyacyl-ACPs. This chain is 3-hydroxyacyl-[acyl-carrier-protein] dehydratase FabZ, found in Streptococcus agalactiae serotype III (strain NEM316).